Here is a 190-residue protein sequence, read N- to C-terminus: Putative manganese efflux pump MntP (190 aa).

6 helical membrane-spanning segments follow: residues 3 to 23 (PISL…AALG), 41 to 61 (LIFG…GQVA), 69 to 89 (DHWI…YNGI), 105 to 125 (FWIL…VGVG), 133 to 153 (IVVA…IGVM), and 168 to 188 (IIGG…HLSA).

It belongs to the MntP (TC 9.B.29) family.

The protein resides in the cell inner membrane. In terms of biological role, probably functions as a manganese efflux pump. This Pseudomonas syringae pv. syringae (strain B728a) protein is Putative manganese efflux pump MntP.